The chain runs to 491 residues: Probable CtpA-like serine protease (491 aa).

A disordered region spans residues 1–22 (MNDHQKNHATSQDDNTKSTPSK). Residues 8 to 22 (HATSQDDNTKSTPSK) are compositionally biased toward polar residues. The chain crosses the membrane as a helical span at residues 31–51 (LWHFILVILGIILLTSIITVV). In terms of domain architecture, PDZ spans 119 to 201 (TKQFNEGVSG…TYVTLTIKRG (83 aa)). Catalysis depends on charge relay system residues S324, D335, and K349.

Belongs to the peptidase S41A family.

It is found in the cell membrane. The polypeptide is Probable CtpA-like serine protease (Staphylococcus epidermidis (strain ATCC 12228 / FDA PCI 1200)).